Here is a 378-residue protein sequence, read N- to C-terminus: D-galactarolactone cycloisomerase (378 aa).

3 residues coordinate Mg(2+): D194, E220, and E246. H296 serves as the catalytic Proton acceptor.

It belongs to the mandelate racemase/muconate lactonizing enzyme family. As to quaternary structure, homooctamer. It depends on Mg(2+) as a cofactor.

The enzyme catalyses D-glucaro-1,4-lactone = 5-dehydro-4-deoxy-D-glucarate + H(+). It carries out the reaction D-galactaro-1,4-lactone = 5-dehydro-4-deoxy-D-glucarate + H(+). The protein operates within carbohydrate acid metabolism; D-galacturonate degradation via prokaryotic oxidative pathway. In terms of biological role, catalyzes the ring opening of D-galactaro-1,4-lactone to yield 5-keto-4-deoxy-D-glucarate (KDG) via a beta-elimination reaction. This is a step in the oxidative degradation pathway of D-galacturonate, which allows A.tumefaciens to utilize D-galacturonate as a sole carbon source. To a lesser extent, can also use D-glucaro-1,4-lactone as substrate to produce KDG, but cannot use D-galactaro-1,5-lactone, D-glucaro-6,3-lactone and linear D-glucarate. This chain is D-galactarolactone cycloisomerase (gci), found in Agrobacterium fabrum (strain C58 / ATCC 33970) (Agrobacterium tumefaciens (strain C58)).